The primary structure comprises 344 residues: Protein RecA (344 aa).

65–72 (GPESSGKT) lines the ATP pocket.

It belongs to the RecA family.

The protein resides in the cytoplasm. Can catalyze the hydrolysis of ATP in the presence of single-stranded DNA, the ATP-dependent uptake of single-stranded DNA by duplex DNA, and the ATP-dependent hybridization of homologous single-stranded DNAs. It interacts with LexA causing its activation and leading to its autocatalytic cleavage. This Rubrobacter xylanophilus (strain DSM 9941 / JCM 11954 / NBRC 16129 / PRD-1) protein is Protein RecA.